A 143-amino-acid polypeptide reads, in one-letter code: Large ribosomal subunit protein uL13 (143 aa).

This sequence belongs to the universal ribosomal protein uL13 family. In terms of assembly, part of the 50S ribosomal subunit.

Its function is as follows. This protein is one of the early assembly proteins of the 50S ribosomal subunit, although it is not seen to bind rRNA by itself. It is important during the early stages of 50S assembly. The protein is Large ribosomal subunit protein uL13 of Caldanaerobacter subterraneus subsp. tengcongensis (strain DSM 15242 / JCM 11007 / NBRC 100824 / MB4) (Thermoanaerobacter tengcongensis).